A 98-amino-acid polypeptide reads, in one-letter code: MASRFMTDPHAMRDMAGRFEVHAQTVEDEARRMWASAQNISGAGWSGQAEATSLDTMTQMNQAFRNIVNMLHGVRDGLVRDANNYEQQEQASQQILSS.

It belongs to the WXG100 family. CFP-10 subfamily.

It localises to the secreted. This Mycobacterium bovis (strain ATCC BAA-935 / AF2122/97) protein is ESAT-6-like protein EsxM (esxM).